The chain runs to 320 residues: Heterogeneous nuclear ribonucleoprotein A1-like 3 (320 aa).

RRM domains are found at residues 14–97 (RKLF…DSQR) and 105–184 (KKIF…LSKQ). Disordered regions lie at residues 182-218 (SKQE…NFGR) and 271-320 (SNFG…GRRF). Residues 197–218 (SGSGNFGGGRGGGFGGNDNFGR) are compositionally biased toward gly residues. Positions 308-320 (SSSSSSYGSGRRF) are enriched in low complexity.

In Homo sapiens (Human), this protein is Heterogeneous nuclear ribonucleoprotein A1-like 3.